Reading from the N-terminus, the 462-residue chain is MIFDKVLSTINKHNLIQKGDKIVLGLSGGPDSVCLLHVLNRLKKDFNIEIYAAHLNHQIRGIEAQKDALYVSKLCEDMGIIFFVKSINVPKYCENEGLSLEEGARKLRYEMFYEIKDKIKANKIAIGHNLNDQAETVMMRIMRGTGLKGLKGIDYIRDNCIIRPILDVERNEIEEYCEAYNLNPRIDKTNLENIYTRNKIRLDLLPYMKDNFNSNVIESIVRMSNSLKSDNDYIEKEAEAKFREVSNIKEKGFVEINLDDFVCLHDAIKVRVLRNSIKHILGDTNFVDQRHIEDIMSLEDNSKVNKMLTLPRNIFVYRKKDSIILTNEEIVNEEIEFYYNVPSNGFIKIKELKQIIETQVMSIDRYKSMKLDNSSKGFDFNKVKGGIVIRSRRQGDKIKLAMGSKKVKDLFIDLKIPREERCKIPIITDSEGIICVGDYKISENYKIDENTKEVLKINFNKL.

Position 27-32 (27-32 (SGGPDS)) interacts with ATP.

The protein belongs to the tRNA(Ile)-lysidine synthase family.

The protein resides in the cytoplasm. It carries out the reaction cytidine(34) in tRNA(Ile2) + L-lysine + ATP = lysidine(34) in tRNA(Ile2) + AMP + diphosphate + H(+). In terms of biological role, ligates lysine onto the cytidine present at position 34 of the AUA codon-specific tRNA(Ile) that contains the anticodon CAU, in an ATP-dependent manner. Cytidine is converted to lysidine, thus changing the amino acid specificity of the tRNA from methionine to isoleucine. In Clostridioides difficile (strain 630) (Peptoclostridium difficile), this protein is tRNA(Ile)-lysidine synthase.